Here is a 706-residue protein sequence, read N- to C-terminus: Ribosomal RNA large subunit methyltransferase K/L (706 aa).

In terms of domain architecture, THUMP spans 43 to 154 (LMYQSLLWSR…RDMASVALDL (112 aa)).

It belongs to the methyltransferase superfamily. RlmKL family.

The protein resides in the cytoplasm. It carries out the reaction guanosine(2445) in 23S rRNA + S-adenosyl-L-methionine = N(2)-methylguanosine(2445) in 23S rRNA + S-adenosyl-L-homocysteine + H(+). The catalysed reaction is guanosine(2069) in 23S rRNA + S-adenosyl-L-methionine = N(2)-methylguanosine(2069) in 23S rRNA + S-adenosyl-L-homocysteine + H(+). Specifically methylates the guanine in position 2445 (m2G2445) and the guanine in position 2069 (m7G2069) of 23S rRNA. This chain is Ribosomal RNA large subunit methyltransferase K/L, found in Yersinia pseudotuberculosis serotype O:1b (strain IP 31758).